The following is a 362-amino-acid chain: Solute carrier family 25 member 3 (362 aa).

Residues 1-49 (MFSSVAHLARANPFNTPHLQLVHDGLGDLRSSSPGPTGQPRRPRNLAAA) constitute a mitochondrion transit peptide. Residues 50-63 (AVEEQYSCDYGSGR) are Mitochondrial intermembrane-facing. Solcar repeat units lie at residues 63–147 (RFFI…FKVL), 160–244 (WRTS…TVEA), and 261–339 (EQLV…VKVY). A helical membrane pass occupies residues 64–86 (FFILCGLGGIISCGTTHTALVPL). The Mitochondrial matrix portion of the chain corresponds to 87–121 (DLVKCRMQVDPQKYKGIFNGFSVTLKEDGVRGLAK). N6-acetyllysine is present on Lys99. An N6-methyllysine modification is found at Lys112. The chain crosses the membrane as a helical span at residues 122 to 141 (GWAPTFLGYSMQGLCKFGFY). At 142–161 (EVFKVLYSNMLGEENTYLWR) the chain is on the mitochondrial intermembrane side. Residues 162-183 (TSLYLAASASAEFFADIALAPM) form a helical membrane-spanning segment. Topologically, residues 184-218 (EAAKVRIQTQPGYANTLRDAAPKMYKEEGLKAFYK) are mitochondrial matrix. The residue at position 196 (Tyr196) is a Phosphotyrosine. Lys209 is subject to N6-acetyllysine. The helical transmembrane segment at 219 to 238 (GVAPLWMRQIPYTMMKFACF) threads the bilayer. Topologically, residues 239 to 261 (ERTVEALYKFVVPKPRSECSKPE) are mitochondrial intermembrane. A helical transmembrane segment spans residues 262–284 (QLVVTFVAGYIAGVFCAIVSHPA). Residues 285-314 (DSVVSVLNKEKGSSASLVLKRLGFKGVWKG) lie on the Mitochondrial matrix side of the membrane. The helical transmembrane segment at 315-333 (LFARIIMIGTLTALQWFIY) threads the bilayer. Over 334–362 (DSVKVYFRLPRPPPPEMPESLKKKLGLTQ) the chain is Mitochondrial intermembrane.

This sequence belongs to the mitochondrial carrier (TC 2.A.29) family. In terms of assembly, interacts with PPIF; the interaction is impaired by CsA.

The protein localises to the mitochondrion inner membrane. The catalysed reaction is phosphate(in) + H(+)(in) = phosphate(out) + H(+)(out). In terms of biological role, inorganic ion transporter that transports phosphate or copper ions across the mitochondrial inner membrane into the matrix compartment. Mediates proton-coupled symport of phosphate ions necessary for mitochondrial oxidative phosphorylation of ADP to ATP. Transports copper ions probably in the form of anionic copper(I) complexes to maintain mitochondrial matrix copper pool and to supply copper for cytochrome C oxidase complex assembly. May also play a role in regulation of the mitochondrial permeability transition pore (mPTP). This chain is Solute carrier family 25 member 3, found in Homo sapiens (Human).